The sequence spans 142 residues: MSMKSHLELFKQKKSTAYILLTVLFGIGWATLDLPVMVAMNIRPSISMRPIKPYISWLDSLLKPLPFNSAFGTNSTAHVDLREFLLFIGLNTSPCVSETIAIFLVCCFDRSIFIATEYLFLILLPLRGLCHQFCEQKYVETI.

3 helical membrane-spanning segments follow: residues 19–39 (ILLTVLFGIGWATLDLPVMVA), 84–104 (FLLFIGLNTSPCVSETIAIFL), and 111–131 (SIFIATEYLFLILLPLRGLCH).

The protein resides in the membrane. Identified in a screen for mutants with decreased levels of rDNA transcription. The sequence is that of Putative regulator of rDNA transcription protein 16 (RRT16) from Saccharomyces cerevisiae (strain ATCC 204508 / S288c) (Baker's yeast).